The primary structure comprises 98 residues: Citrate lyase acyl carrier protein (98 aa).

Residue serine 14 is modified to O-(phosphoribosyl dephospho-coenzyme A)serine.

Belongs to the CitD family. In terms of assembly, oligomer with a subunit composition of (alpha,beta,gamma)6.

It is found in the cytoplasm. In terms of biological role, covalent carrier of the coenzyme of citrate lyase. This is Citrate lyase acyl carrier protein from Escherichia coli O127:H6 (strain E2348/69 / EPEC).